We begin with the raw amino-acid sequence, 213 residues long: Putative nascent polypeptide-associated complex subunit alpha-like protein (213 aa).

Positions 1 to 46 (MPGEATETVPAIEQQLLQPQAETGSGTESDSDESVPELEEQDSTQV) are disordered. The span at 15 to 28 (QLLQPQAETGSGTE) shows a compositional bias: polar residues. Positions 29-42 (SDSDESVPELEEQD) are enriched in acidic residues. Ser-43 and Ser-131 each carry phosphoserine. One can recognise an NAC-A/B domain in the interval 69 to 134 (RRSEKKARKA…AKIEDLSQEA (66 aa)). Lys-141 is subject to N6-acetyllysine; alternate. A Glycyl lysine isopeptide (Lys-Gly) (interchain with G-Cter in SUMO2); alternate cross-link involves residue Lys-141. At Thr-160 the chain carries Phosphothreonine. Ser-165, Ser-185, and Ser-201 each carry phosphoserine. The region spanning 175-211 (VEIKDIELVLSQANVWGAKAVRALKNSNDIVNAIMEL) is the UBA domain. Thr-212 is modified (phosphothreonine).

It belongs to the NAC-alpha family.

In Homo sapiens (Human), this protein is Putative nascent polypeptide-associated complex subunit alpha-like protein.